We begin with the raw amino-acid sequence, 90 residues long: Small ribosomal subunit protein bS20 (90 aa).

The protein belongs to the bacterial ribosomal protein bS20 family.

Functionally, binds directly to 16S ribosomal RNA. The protein is Small ribosomal subunit protein bS20 of Francisella tularensis subsp. holarctica (strain FTNF002-00 / FTA).